A 134-amino-acid chain; its full sequence is Gastrin-releasing peptide (134 aa).

A signal peptide spans 1 to 23 (MRGREVPLVLLALVLCLAPRGWA). Methionine amide is present on Met50. The propeptide occupies 54–134 (SVAESPQLHE…QHEGRNPQLN (81 aa)). The disordered stretch occupies residues 95–134 (GHQMPPWEPLSIHQPAWDSEDVSNFKDTGPQHEGRNPQLN). Basic and acidic residues predominate over residues 123-134 (GPQHEGRNPQLN).

The protein belongs to the bombesin/neuromedin-B/ranatensin family. As to expression, detected in adrenal medulla (at protein level).

The protein resides in the cytoplasmic vesicle. Its subcellular location is the secretory vesicle lumen. It localises to the secreted. It is found in the cell projection. The protein localises to the neuron projection. In terms of biological role, stimulates the release of gastrin and other gastrointestinal hormones. Contributes to the perception of prurient stimuli and to the transmission of itch signals in the spinal cord that promote scratching behavior. Contributes primarily to nonhistaminergic itch sensation. In one study, shown to act in the amygdala as part of an inhibitory network which inhibits memory specifically related to learned fear. In another study, shown to act on vasoactive intestinal peptide (VIP)-expressing cells in the auditory cortex, most likely via extrasynaptic diffusion from local and long-range sources, to mediate disinhibition of glutamatergic cells via VIP cell-specific GRPR signaling which leads to enhanced auditory fear memories. Contributes to the regulation of food intake. Inhibits voltage-gated sodium channels but enhances voltage-gated potassium channels in hippocampal neurons. Induces sighing by acting directly on the pre-Botzinger complex, a cluster of several thousand neurons in the ventrolateral medulla responsible for inspiration during respiratory activity. Its function is as follows. Induces an itch response through activation of receptors present on mast cells, triggering mast cell degranulation. The chain is Gastrin-releasing peptide (GRP) from Bos taurus (Bovine).